Here is a 95-residue protein sequence, read N- to C-terminus: Large ribosomal subunit protein uL23 (95 aa).

This sequence belongs to the universal ribosomal protein uL23 family. As to quaternary structure, part of the 50S ribosomal subunit. Contacts protein L29, and trigger factor when it is bound to the ribosome.

One of the early assembly proteins it binds 23S rRNA. One of the proteins that surrounds the polypeptide exit tunnel on the outside of the ribosome. Forms the main docking site for trigger factor binding to the ribosome. The polypeptide is Large ribosomal subunit protein uL23 (Pelotomaculum thermopropionicum (strain DSM 13744 / JCM 10971 / SI)).